The sequence spans 833 residues: Probable serine/threonine-protein kinase DDB_G0277165 (833 aa).

In terms of domain architecture, Protein kinase spans 9–262; sequence FIIGKTLGQG…IKEIKEHPWF (254 aa). ATP is bound by residues 15-23 and K38; that span reads LGQGTTGKV. D133 (proton acceptor) is an active-site residue. Residues 288-329 form the UBA domain; that stretch reads QIDEDIFRSLMALGVGTIDEVKQQLVSNQKSATLIYYRLLEE. Positions 338–351 are enriched in basic and acidic residues; that stretch reads NKYGYKPKETRRNS. Disordered stretches follow at residues 338 to 472, 528 to 626, and 764 to 799; these read NKYG…ISPS, QALQ…PIEI, and FINP…GGQN. Low complexity-rich tracts occupy residues 365-432 and 441-459; these read NNNN…NNNN and SSSQ…QIPS. Over residues 460-472 the composition is skewed to polar residues; it reads NSTSQESMQISPS. Residues 528-589 are compositionally biased toward low complexity; sequence QALQQHHQQQ…SSTSTSPQLS (62 aa). The span at 600–625 shows a compositional bias: polar residues; it reads GSMTASTNPATSPTMSHRGKTSSPIE.

It belongs to the protein kinase superfamily. CAMK Ser/Thr protein kinase family.

The enzyme catalyses L-seryl-[protein] + ATP = O-phospho-L-seryl-[protein] + ADP + H(+). It carries out the reaction L-threonyl-[protein] + ATP = O-phospho-L-threonyl-[protein] + ADP + H(+). The chain is Probable serine/threonine-protein kinase DDB_G0277165 from Dictyostelium discoideum (Social amoeba).